A 319-amino-acid polypeptide reads, in one-letter code: 1-aminocyclopropane-1-carboxylate oxidase 1 (319 aa).

Residues 153-253 (PNFGTKVSNY…RMSLASFYNP (101 aa)) enclose the Fe2OG dioxygenase domain. Fe cation contacts are provided by His-177, Asp-179, and His-234.

Belongs to the iron/ascorbate-dependent oxidoreductase family. Requires Fe cation as cofactor.

It catalyses the reaction 1-aminocyclopropane-1-carboxylate + L-ascorbate + O2 = ethene + L-dehydroascorbate + hydrogen cyanide + CO2 + 2 H2O. Its pathway is alkene biosynthesis; ethylene biosynthesis via S-adenosyl-L-methionine; ethylene from S-adenosyl-L-methionine: step 2/2. The chain is 1-aminocyclopropane-1-carboxylate oxidase 1 (ACO1) from Petunia hybrida (Petunia).